The primary structure comprises 430 residues: 3-phosphoshikimate 1-carboxyvinyltransferase (430 aa).

Residues Lys25, Ser26, and Arg30 each contribute to the 3-phosphoshikimate site. Lys25 serves as a coordination point for phosphoenolpyruvate. Residues Gly97 and Arg125 each coordinate phosphoenolpyruvate. Residues Ser170, Gln172, Asp318, and Lys345 each coordinate 3-phosphoshikimate. A phosphoenolpyruvate-binding site is contributed by Gln172. Asp318 functions as the Proton acceptor in the catalytic mechanism. Phosphoenolpyruvate-binding residues include Arg349 and Arg391.

Belongs to the EPSP synthase family. Monomer.

Its subcellular location is the cytoplasm. It catalyses the reaction 3-phosphoshikimate + phosphoenolpyruvate = 5-O-(1-carboxyvinyl)-3-phosphoshikimate + phosphate. It functions in the pathway metabolic intermediate biosynthesis; chorismate biosynthesis; chorismate from D-erythrose 4-phosphate and phosphoenolpyruvate: step 6/7. Functionally, catalyzes the transfer of the enolpyruvyl moiety of phosphoenolpyruvate (PEP) to the 5-hydroxyl of shikimate-3-phosphate (S3P) to produce enolpyruvyl shikimate-3-phosphate and inorganic phosphate. The polypeptide is 3-phosphoshikimate 1-carboxyvinyltransferase (Shouchella clausii (strain KSM-K16) (Alkalihalobacillus clausii)).